The following is a 370-amino-acid chain: Accessory Sec system protein translocase subunit SecY2 (370 aa).

Transmembrane regions (helical) follow at residues 17 to 37 (IIFT…PAIT), 65 to 85 (VFSL…LFYY), 105 to 125 (IFTL…LLSH), 134 to 154 (WLII…SDLN), 155 to 175 (MRFG…RSIM), 188 to 208 (LLIS…FIEI), 240 to 260 (IAIM…NLIV), 276 to 296 (FSTP…SYGI), and 339 to 359 (WIGA…TLLI).

This sequence belongs to the SecY/SEC61-alpha family. SecY2 subfamily. In terms of assembly, component of the accessory SecA2/SecY2 protein translocase complex required to export cell wall proteins. May form heterotrimers with SecE and SecG subunits.

It is found in the cell membrane. Functionally, part of the accessory SecA2/SecY2 system specifically required for export of possible cell wall proteins. The central subunit of a protein translocation channel. The sequence is that of Accessory Sec system protein translocase subunit SecY2 from Staphylococcus carnosus (strain TM300).